A 325-amino-acid chain; its full sequence is Elongation factor P--(R)-beta-lysine ligase (325 aa).

Residue 76-78 (SPE) coordinates substrate. Residues 100 to 102 (RNE) and Asn109 each bind ATP. Position 118 (Tyr118) interacts with substrate. 244–245 (EL) is a binding site for ATP. A substrate-binding site is contributed by Glu251. Gly300 serves as a coordination point for ATP.

This sequence belongs to the class-II aminoacyl-tRNA synthetase family. EpmA subfamily. As to quaternary structure, homodimer.

It carries out the reaction D-beta-lysine + L-lysyl-[protein] + ATP = N(6)-((3R)-3,6-diaminohexanoyl)-L-lysyl-[protein] + AMP + diphosphate + H(+). With EpmB is involved in the beta-lysylation step of the post-translational modification of translation elongation factor P (EF-P). Catalyzes the ATP-dependent activation of (R)-beta-lysine produced by EpmB, forming a lysyl-adenylate, from which the beta-lysyl moiety is then transferred to the epsilon-amino group of a conserved specific lysine residue in EF-P. The protein is Elongation factor P--(R)-beta-lysine ligase of Yersinia pseudotuberculosis serotype O:1b (strain IP 31758).